Consider the following 495-residue polypeptide: Omega-crystallin (495 aa).

This sequence belongs to the aldehyde dehydrogenase family. Lens.

Functionally, omega-crystallins are structural components of squids and octopi eye lens. Contains relatively little if any DHAL activity. In Nototodarus sloanii (Wellington flying squid), this protein is Omega-crystallin.